We begin with the raw amino-acid sequence, 496 residues long: Alanine aminotransferase 1 (496 aa).

An N-acetylalanine modification is found at alanine 2. Threonine 22 carries the post-translational modification Phosphothreonine. At lysine 314 the chain carries N6-(pyridoxal phosphate)lysine.

The protein belongs to the class-I pyridoxal-phosphate-dependent aminotransferase family. Alanine aminotransferase subfamily. In terms of assembly, homodimer. The cofactor is pyridoxal 5'-phosphate.

It is found in the cytoplasm. It catalyses the reaction L-alanine + 2-oxoglutarate = pyruvate + L-glutamate. Its pathway is amino-acid degradation; L-alanine degradation via transaminase pathway; pyruvate from L-alanine: step 1/1. Functionally, catalyzes the reversible transamination between alanine and 2-oxoglutarate to form pyruvate and glutamate. Participates in cellular nitrogen metabolism and also in liver gluconeogenesis starting with precursors transported from skeletal muscles. This Bos taurus (Bovine) protein is Alanine aminotransferase 1 (GPT).